The sequence spans 126 residues: SOSS complex subunit C homolog (126 aa).

Residues 106–126 form a disordered region; the sequence is LEPLPSPATTPTAPPSHSISK. The span at 107–119 shows a compositional bias: pro residues; it reads EPLPSPATTPTAP.

Belongs to the SOSS-C family.

In Drosophila sechellia (Fruit fly), this protein is SOSS complex subunit C homolog.